The primary structure comprises 146 residues: Wheatwin-1 (146 aa).

The signal sequence occupies residues 1–21 (MAARPMLVVALLCAAAAAATA). Glutamine 22 bears the Pyrrolidone carboxylic acid mark. Positions 22–146 (QQATNVRATY…VNYQFVDCRD (125 aa)) constitute a Barwin domain. 3 cysteine pairs are disulfide-bonded: cysteine 52-cysteine 84, cysteine 73-cysteine 107, and cysteine 87-cysteine 144.

Monomer.

Its activity is regulated as follows. Inhibited by 5'-ADP. Shows antifungal activity towards B.cinerea and towards the wheat-specific pathogenic fungi F.culmorum and F.graminearum (groups 1 and 2). Has ribonuclease activity. In Triticum aestivum (Wheat), this protein is Wheatwin-1 (PR4A).